An 88-amino-acid chain; its full sequence is Small ribosomal subunit protein bS20 (88 aa).

The disordered stretch occupies residues 1–20 (MANTAQARKRARQAVVQNAH).

This sequence belongs to the bacterial ribosomal protein bS20 family.

Functionally, binds directly to 16S ribosomal RNA. The chain is Small ribosomal subunit protein bS20 from Ralstonia nicotianae (strain ATCC BAA-1114 / GMI1000) (Ralstonia solanacearum).